Consider the following 427-residue polypeptide: MSSIVVVGTQWGDEGKGKITDFLAEQADVIARFSGGNNAGHTIQFGGETYKLHLVPSGIFYKDKLAVIGNGVVVDPVALLKELDGLNERGISTDNLRISNRAQVILPYHLAQDEYEERRRGDNKIGTTKKGIGPAYVDKAQRIGIRMADLLEKETFERRLKENIEYKNACFKGMFNETCPTFDEIFDEYYAAGQRLKDYVTDTAKILDDANVADEKVLFEGAQGVMLDIDHGTYPFVTSSNPVAGNVTVGTGVGPTSVSKVIGVCKSYTSRVGDGPFPTELFDEDGHHIREVGREYGTTTGRPRRVGWFDSVVLRHSRRVSGITDLSINSIDVLTGLDTVKICTAYELDGEKITEYPANLDQLRRCKPIFEELPGWTEDITGCRSLDELPENARNYLERISELCGVHISIFSVGPDREQTNLLEQLW.

Residues 12–18 (GDEGKGK) and 40–42 (GHT) each bind GTP. The active-site Proton acceptor is aspartate 13. Mg(2+) contacts are provided by aspartate 13 and glycine 40. IMP-binding positions include 13 to 16 (DEGK), 38 to 41 (NAGH), threonine 128, arginine 142, glutamine 223, threonine 238, and arginine 302. The active-site Proton donor is histidine 41. 298-304 (TTTGRPR) is a substrate binding site. GTP-binding positions include arginine 304, 330–332 (SID), and 412–414 (SVG).

It belongs to the adenylosuccinate synthetase family. Homodimer. Requires Mg(2+) as cofactor.

The protein resides in the cytoplasm. The enzyme catalyses IMP + L-aspartate + GTP = N(6)-(1,2-dicarboxyethyl)-AMP + GDP + phosphate + 2 H(+). The protein operates within purine metabolism; AMP biosynthesis via de novo pathway; AMP from IMP: step 1/2. Functionally, plays an important role in the de novo pathway of purine nucleotide biosynthesis. Catalyzes the first committed step in the biosynthesis of AMP from IMP. In Staphylococcus epidermidis (strain ATCC 12228 / FDA PCI 1200), this protein is Adenylosuccinate synthetase.